The primary structure comprises 526 residues: NAD(P)H-quinone oxidoreductase subunit 2 (526 aa).

Helical transmembrane passes span 16–36 (ILPEGIVVITLLVVLVGDLIL), 43–63 (WTPYAAIVGLLGAIVALYTQW), 80–100 (LSIAFRGIIAISAITTILMSV), 110–130 (LGEFICILLTATLGAMFLSGA), 133–153 (LVMIFISLETLSISSYLLTGY), 168–188 (LLIGAASSAIFLYGISLLYGL), 212–232 (LALVIALVFAIAGISFKISAV), 246–266 (PTPVVAFLSVGSKAAGFALAI), 280–300 (WHFVFTALAILSMVLGNVVAL), 308–328 (LLAYSSIGQAGFVMIGLLANT), 336–356 (IFYLLVYLFMNLGGFTCVILF), 380–400 (LGLSLCLLSLGGIPPLAGFFG), 402–422 (IYLFWAGWQAGLYWLVLLGLI), and 468–488 (VGLILSVLATSLAGILSNPLF).

It belongs to the complex I subunit 2 family. NDH-1 can be composed of about 15 different subunits; different subcomplexes with different compositions have been identified which probably have different functions.

The protein localises to the cellular thylakoid membrane. The catalysed reaction is a plastoquinone + NADH + (n+1) H(+)(in) = a plastoquinol + NAD(+) + n H(+)(out). It catalyses the reaction a plastoquinone + NADPH + (n+1) H(+)(in) = a plastoquinol + NADP(+) + n H(+)(out). NDH-1 shuttles electrons from an unknown electron donor, via FMN and iron-sulfur (Fe-S) centers, to quinones in the respiratory and/or the photosynthetic chain. The immediate electron acceptor for the enzyme in this species is believed to be plastoquinone. Couples the redox reaction to proton translocation, and thus conserves the redox energy in a proton gradient. Cyanobacterial NDH-1 also plays a role in inorganic carbon-concentration. The protein is NAD(P)H-quinone oxidoreductase subunit 2 of Trichodesmium erythraeum (strain IMS101).